The chain runs to 238 residues: 2-C-methyl-D-erythritol 4-phosphate cytidylyltransferase (238 aa).

Belongs to the IspD/TarI cytidylyltransferase family. IspD subfamily.

It catalyses the reaction 2-C-methyl-D-erythritol 4-phosphate + CTP + H(+) = 4-CDP-2-C-methyl-D-erythritol + diphosphate. It functions in the pathway isoprenoid biosynthesis; isopentenyl diphosphate biosynthesis via DXP pathway; isopentenyl diphosphate from 1-deoxy-D-xylulose 5-phosphate: step 2/6. Its function is as follows. Catalyzes the formation of 4-diphosphocytidyl-2-C-methyl-D-erythritol from CTP and 2-C-methyl-D-erythritol 4-phosphate (MEP). This chain is 2-C-methyl-D-erythritol 4-phosphate cytidylyltransferase, found in Acinetobacter baumannii (strain AYE).